A 151-amino-acid chain; its full sequence is MEKPSPTRRQTSSLSTISNGMTMTNDNRDTTNTNSGSTSSNNSQPSSSSTPPAASGPVTDRTKVNYVPKSDDPSSFQYYPDDPENPVNKYKFALKADSQYYDPCEESSKLSFQCLERNDYDRSKCQEYFDAYRECKKQWLTARRKNRQQWE.

A mitochondrion-targeting transit peptide spans 1-10 (MEKPSPTRRQ). Residues 1–86 (MEKPSPTRRQ…QYYPDDPENP (86 aa)) are disordered. Positions 7 to 18 (TRRQTSSLSTIS) are enriched in polar residues. Residues 19–51 (NGMTMTNDNRDTTNTNSGSTSSNNSQPSSSSTP) show a composition bias toward low complexity. Residues 101 to 143 (YDPCEESSKLSFQCLERNDYDRSKCQEYFDAYRECKKQWLTAR) enclose the CHCH domain. 2 short sequence motifs (cx9C motif) span residues 104-114 (CEESSKLSFQC) and 125-135 (CQEYFDAYREC). Cystine bridges form between Cys-104–Cys-135 and Cys-114–Cys-125.

This sequence belongs to the COX23 family.

The protein localises to the cytoplasm. The protein resides in the mitochondrion intermembrane space. Its function is as follows. Required for the assembly of cytochrome c oxidase. The sequence is that of Cytochrome c oxidase-assembly factor COX23, mitochondrial (COX23) from Saccharomyces cerevisiae (strain ATCC 204508 / S288c) (Baker's yeast).